Reading from the N-terminus, the 409-residue chain is Elongation factor Tu (409 aa).

Residues 10-214 enclose the tr-type G domain; it reads KPHVNIGTIG…AVDSYIPDPE (205 aa). The interval 19-26 is G1; that stretch reads GHVDHGKT. Residue 19 to 26 participates in GTP binding; it reads GHVDHGKT. Thr-26 contacts Mg(2+). The segment at 60–64 is G2; the sequence is GITIN. The segment at 81–84 is G3; it reads DCPG. GTP-binding positions include 81–85 and 136–139; these read DCPGH and NKED. A G4 region spans residues 136 to 139; that stretch reads NKED. The G5 stretch occupies residues 174 to 176; the sequence is SGL.

In terms of assembly, monomer.

The protein resides in the cytoplasm. It carries out the reaction GTP + H2O = GDP + phosphate + H(+). In terms of biological role, GTP hydrolase that promotes the GTP-dependent binding of aminoacyl-tRNA to the A-site of ribosomes during protein biosynthesis. The protein is Elongation factor Tu of Nostoc sp. (strain PCC 7120 / SAG 25.82 / UTEX 2576).